We begin with the raw amino-acid sequence, 131 residues long: MTMIAWMQHFLETDETKLIYWLTFLMVCMVVDTVLGVLFAKLNPNIKFSSFKIKTGVLIKVSEMILALLAVPFAVPFPAGLPLLYTVYTALCVSEIYSIFGHLRLVDDKSDFLEILENFFKRTSGKNKEDK.

The Periplasmic segment spans residues 1-15 (MTMIAWMQHFLETDE). Cytoplasmic loops occupy residues 1–52 (MTMI…SSFK) and 39–50 (FAKLNPNIKFSS). The chain crosses the membrane as a helical span at residues 16 to 38 (TKLIYWLTFLMVCMVVDTVLGVL). Residues 53–75 (IKTGVLIKVSEMILALLAVPFAV) form a helical membrane-spanning segment. Over 76–78 (PFP) the chain is Periplasmic. Residues 79–101 (AGLPLLYTVYTALCVSEIYSIFG) traverse the membrane as a helical segment. The Cytoplasmic portion of the chain corresponds to 102–131 (HLRLVDDKSDFLEILENFFKRTSGKNKEDK).

Belongs to the bacteriophage holin family. phi29likevirus holin subfamily. As to quaternary structure, homomultimer. Interacts with isoform Antiholin; this interaction blocks the holin homomultimerization and delays host cell lysis.

The protein resides in the host cell inner membrane. Functionally, accumulates harmlessly in the cytoplasmic membrane until it reaches a critical concentration that triggers the formation of micron-scale pores (holes) causing host cell membrane disruption and endolysin escape into the periplasmic space. Determines the precise timing of host cell lysis. Participates with the endolysin and spanin proteins in the sequential events which lead to the programmed host cell lysis releasing the mature viral particles from the host cell. Counteracts the aggregation of the holin molecules and thus of pore formation. This chain is Antiholin (14), found in Bacillus subtilis (Bacteriophage PZA).